The sequence spans 343 residues: 4-hydroxy-2-oxovalerate aldolase (343 aa).

A Pyruvate carboxyltransferase domain is found at Pro4–Met254. Arg12–Asp13 contributes to the substrate binding site. Residue Asp13 coordinates Mn(2+). The active-site Proton acceptor is the His16. Substrate-binding residues include Ser166 and His193. Residues His193 and His195 each coordinate Mn(2+). Residue Tyr284 coordinates substrate.

This sequence belongs to the 4-hydroxy-2-oxovalerate aldolase family.

The catalysed reaction is (S)-4-hydroxy-2-oxopentanoate = acetaldehyde + pyruvate. The sequence is that of 4-hydroxy-2-oxovalerate aldolase from Chloroflexus aurantiacus (strain ATCC 29364 / DSM 637 / Y-400-fl).